The primary structure comprises 342 residues: Nuclear hormone receptor family member nhr-150 (342 aa).

The nuclear receptor DNA-binding region spans 1-71 (MCQVCGAAEA…AGMTSKKIQS (71 aa)). An NR C4-type zinc finger spans residues 2 to 22 (CQVCGAAEADLHFGGISCRAC). The NR C4-type; degenerate zinc-finger motif lies at 39–54 (CTCKTRILDSHPCRSC). Positions 94–341 (SARIIPRSSL…GFMEIIRESK (248 aa)) constitute an NR LBD domain.

It belongs to the nuclear hormone receptor family.

It localises to the nucleus. Orphan nuclear receptor. This chain is Nuclear hormone receptor family member nhr-150 (nhr-150), found in Caenorhabditis elegans.